The primary structure comprises 661 residues: UvrABC system protein B (661 aa).

The region spanning 23–180 (EGLQKGYRIQ…THLARIGYER (158 aa)) is the Helicase ATP-binding domain. ATP is bound at residue 36-43 (GVTGSGKT). A Beta-hairpin motif is present at residues 89-112 (YYDYYQPEAYIPTRDLYIEKNADI). Residues 426-592 (QIDDLVNEIA…TIIKPLDEEI (167 aa)) enclose the Helicase C-terminal domain. Positions 620-655 (EEYIALLEEEMYKAASELRYEDAARLRDELFNIREK) constitute a UVR domain.

The protein belongs to the UvrB family. Forms a heterotetramer with UvrA during the search for lesions. Interacts with UvrC in an incision complex.

The protein localises to the cytoplasm. In terms of biological role, the UvrABC repair system catalyzes the recognition and processing of DNA lesions. A damage recognition complex composed of 2 UvrA and 2 UvrB subunits scans DNA for abnormalities. Upon binding of the UvrA(2)B(2) complex to a putative damaged site, the DNA wraps around one UvrB monomer. DNA wrap is dependent on ATP binding by UvrB and probably causes local melting of the DNA helix, facilitating insertion of UvrB beta-hairpin between the DNA strands. Then UvrB probes one DNA strand for the presence of a lesion. If a lesion is found the UvrA subunits dissociate and the UvrB-DNA preincision complex is formed. This complex is subsequently bound by UvrC and the second UvrB is released. If no lesion is found, the DNA wraps around the other UvrB subunit that will check the other stand for damage. This chain is UvrABC system protein B, found in Thermosipho africanus (strain TCF52B).